We begin with the raw amino-acid sequence, 79 residues long: Conotoxin 12 (79 aa).

A signal peptide spans Met1–Ala22. The propeptide occupies Asp23–Arg47. 3 disulfides stabilise this stretch: Cys49–Cys62, Cys56–Cys67, and Cys61–Cys77.

The protein belongs to the conotoxin O1 superfamily. Expressed by the venom duct.

Its subcellular location is the secreted. This is Conotoxin 12 from Conus vexillum (Flag cone).